The following is a 435-amino-acid chain: Gap junction alpha-3 protein (435 aa).

An intramembrane segment occupies 2–15 (GDWSFLGRLLENAQ). Residues 16 to 19 (EHST) lie on the Cytoplasmic side of the membrane. The chain crosses the membrane as a helical span at residues 20 to 40 (VIGKVWLTVLFIFRILVLGAA). Residues 41-71 (AEDVWGDEQSDFTCNTQQPGCENVCYDRAFP) are Extracellular-facing. 3 disulfide bridges follow: cysteine 54–cysteine 192, cysteine 61–cysteine 186, and cysteine 65–cysteine 181. A helical membrane pass occupies residues 72-92 (ISHIRFWALQIIFVSTPTLIY). At 93–152 (LGHVLHIVRMEEKKKEREEEEQLKRESPSPKEPPQDNPSSRDDRGRVRMAGALLRTYVFN) the chain is on the cytoplasmic side. A compositionally biased stretch (basic and acidic residues) spans 108–121 (EREEEEQLKRESPS). The tract at residues 108–136 (EREEEEQLKRESPSPKEPPQDNPSSRDDR) is disordered. Residues 153 to 173 (IIFKTLFEVGFIAGQYFLYGF) form a helical membrane-spanning segment. At 174–201 (ELKPLYRCDRWPCPNTVDCFISRPTEKT) the chain is on the extracellular side. Residues 202-222 (IFIIFMLAVACASLLLNMLEI) traverse the membrane as a helical segment. At 223–435 (YHLGWKKLKQ…GRARPEDLAI (213 aa)) the chain is on the cytoplasmic side. The interval 332–435 (AAERQPPALK…GRARPEDLAI (104 aa)) is disordered. 2 stretches are compositionally biased toward low complexity: residues 342–389 (AYPA…ALAG) and 415–427 (GRAS…SSGR).

Belongs to the connexin family. Alpha-type (group II) subfamily. In terms of assembly, a hemichannel or connexon is composed of a hexamer of connexins. A functional gap junction is formed by the apposition of two hemichannels. Forms heteromeric channels with GJA8.

The protein localises to the cell membrane. The protein resides in the cell junction. Its subcellular location is the gap junction. Functionally, structural component of lens fiber gap junctions. Gap junctions are dodecameric channels that connect the cytoplasm of adjoining cells. They are formed by the docking of two hexameric hemichannels, one from each cell membrane. Small molecules and ions diffuse from one cell to a neighboring cell via the central pore. This Homo sapiens (Human) protein is Gap junction alpha-3 protein (GJA3).